The following is a 253-amino-acid chain: NAD-dependent protein deacetylase (253 aa).

The Deacetylase sirtuin-type domain maps to 3–253 (APSLSSGVEQ…GETLGPFVGN (251 aa)). 8 residues coordinate NAD(+): Ala-29, Thr-33, Phe-40, Arg-41, Gln-106, Ile-108, Asp-109, and His-126. Phe-40 contacts nicotinamide. 2 residues coordinate nicotinamide: Ile-108 and Asp-109. His-126 (proton acceptor) is an active-site residue. Positions 134, 137, 159, and 162 each coordinate Zn(2+). Residues Ser-200, Ser-201, Asn-225, Asp-242, and Ile-243 each contribute to the NAD(+) site.

This sequence belongs to the sirtuin family. Class U subfamily. The cofactor is Zn(2+).

Its subcellular location is the cytoplasm. It carries out the reaction N(6)-acetyl-L-lysyl-[protein] + NAD(+) + H2O = 2''-O-acetyl-ADP-D-ribose + nicotinamide + L-lysyl-[protein]. NAD-dependent protein deacetylase which modulates the activities of several enzymes which are inactive in their acetylated form. The polypeptide is NAD-dependent protein deacetylase (Rhodopseudomonas palustris (strain ATCC BAA-98 / CGA009)).